A 516-amino-acid polypeptide reads, in one-letter code: Endoglucanase 20 (516 aa).

The N-terminal stretch at 1-23 (MAAGMVATMVLLTCLAAGGLVVG) is a signal peptide. Residue Asn-83 is glycosylated (N-linked (GlcNAc...) asparagine). Asp-93 functions as the Nucleophile in the catalytic mechanism. Residues His-416, Asp-468, and Glu-477 contribute to the active site.

It belongs to the glycosyl hydrolase 9 (cellulase E) family.

It localises to the secreted. The enzyme catalyses Endohydrolysis of (1-&gt;4)-beta-D-glucosidic linkages in cellulose, lichenin and cereal beta-D-glucans.. The sequence is that of Endoglucanase 20 (GLU15) from Oryza sativa subsp. japonica (Rice).